Consider the following 334-residue polypeptide: Protein SCO1 homolog 1, mitochondrial (334 aa).

A mitochondrion-targeting transit peptide spans 1-13; the sequence is MASALCRTASRLR. Positions 74–120 are disordered; sequence SASDTTSKHDSGKPETKSSEKNEKSGGSESSDGGSDHKNERASGKDV. Basic and acidic residues-rich tracts occupy residues 79 to 99 and 107 to 120; these read TSKHDSGKPETKSSEKNEKSG and GSDHKNERASGKDV. Residues 125-144 traverse the membrane as a helical segment; that stretch reads VSWMSFFLLFATGAGLVYYY. Residues 166-331 form the Thioredoxin domain; the sequence is PSAGKAAIGG…TDGVVKEIRQ (166 aa). Residues Cys-206, Cys-210, and His-295 each coordinate Cu cation.

It belongs to the SCO1/2 family. As to expression, expressed in the whole plant with highest expression in imbibed seeds, embryos, endosperm, and root tips.

Its subcellular location is the mitochondrion inner membrane. Thought to play a role in cellular copper homeostasis, mitochondrial redox signaling or insertion of copper into the active site of COX. Plays an essential role in embryo development. The chain is Protein SCO1 homolog 1, mitochondrial (HCC1) from Arabidopsis thaliana (Mouse-ear cress).